The following is a 67-amino-acid chain: Large ribosomal subunit protein bL35 (67 aa).

Belongs to the bacterial ribosomal protein bL35 family.

This chain is Large ribosomal subunit protein bL35, found in Novosphingobium aromaticivorans (strain ATCC 700278 / DSM 12444 / CCUG 56034 / CIP 105152 / NBRC 16084 / F199).